The primary structure comprises 114 residues: T cell receptor beta variable 19 (114 aa).

Residues 1–21 (MSNQVLCCVVLCLLGANTVDG) form the signal peptide. The Ig-like domain occupies 22-114 (GITQSPKYLF…TAFYLCASSI (93 aa)). N-linked (GlcNAc...) asparagine glycosylation is present at asparagine 37. Cysteine 42 and cysteine 110 are disulfide-bonded.

In terms of assembly, alpha-beta TR is a heterodimer composed of an alpha and beta chain; disulfide-linked. The alpha-beta TR is associated with the transmembrane signaling CD3 coreceptor proteins to form the TR-CD3 (TcR or TCR). The assembly of alpha-beta TR heterodimers with CD3 occurs in the endoplasmic reticulum where a single alpha-beta TR heterodimer associates with one CD3D-CD3E heterodimer, one CD3G-CD3E heterodimer and one CD247 homodimer forming a stable octameric structure. CD3D-CD3E and CD3G-CD3E heterodimers preferentially associate with TR alpha and TR beta chains, respectively. The association of the CD247 homodimer is the last step of TcR assembly in the endoplasmic reticulum and is required for transport to the cell surface. As to quaternary structure, (Microbial infection) Interacts with Staphylococcus aureus enterotoxin type B/SEB.

It localises to the cell membrane. Functionally, v region of the variable domain of T cell receptor (TR) beta chain that participates in the antigen recognition. Alpha-beta T cell receptors are antigen specific receptors which are essential to the immune response and are present on the cell surface of T lymphocytes. Recognize peptide-major histocompatibility (MH) (pMH) complexes that are displayed by antigen presenting cells (APC), a prerequisite for efficient T cell adaptive immunity against pathogens. Binding of alpha-beta TR to pMH complex initiates TR-CD3 clustering on the cell surface and intracellular activation of LCK that phosphorylates the ITAM motifs of CD3G, CD3D, CD3E and CD247 enabling the recruitment of ZAP70. In turn ZAP70 phosphorylates LAT, which recruits numerous signaling molecules to form the LAT signalosome. The LAT signalosome propagates signal branching to three major signaling pathways, the calcium, the mitogen-activated protein kinase (MAPK) kinase and the nuclear factor NF-kappa-B (NF-kB) pathways, leading to the mobilization of transcription factors that are critical for gene expression and essential for T cell growth and differentiation. The T cell repertoire is generated in the thymus, by V-(D)-J rearrangement. This repertoire is then shaped by intrathymic selection events to generate a peripheral T cell pool of self-MH restricted, non-autoaggressive T cells. Post-thymic interaction of alpha-beta TR with the pMH complexes shapes TR structural and functional avidity. The chain is T cell receptor beta variable 19 from Homo sapiens (Human).